We begin with the raw amino-acid sequence, 140 residues long: Cytochrome c-type biogenesis protein CcmE (140 aa).

The Cytoplasmic portion of the chain corresponds to 1–7; it reads MKRKHKR. A helical; Signal-anchor for type II membrane protein transmembrane segment spans residues 8–28; sequence LLFVLASFCAAGCALLFILSE. Topologically, residues 29–140 are periplasmic; the sequence is LRESVSFFYT…TAPKSSPEPK (112 aa). Heme-binding residues include H121 and Y125.

It belongs to the CcmE/CycJ family.

The protein resides in the cell inner membrane. Functionally, heme chaperone required for the biogenesis of c-type cytochromes. Transiently binds heme delivered by CcmC and transfers the heme to apo-cytochromes in a process facilitated by CcmF and CcmH. This is Cytochrome c-type biogenesis protein CcmE from Anaplasma marginale (strain St. Maries).